Here is a 510-residue protein sequence, read N- to C-terminus: ATP synthase subunit alpha (510 aa).

Position 170-177 (170-177 (GDRQTGKT)) interacts with ATP.

Belongs to the ATPase alpha/beta chains family. F-type ATPases have 2 components, CF(1) - the catalytic core - and CF(0) - the membrane proton channel. CF(1) has five subunits: alpha(3), beta(3), gamma(1), delta(1), epsilon(1). CF(0) has three main subunits: a(1), b(2) and c(9-12). The alpha and beta chains form an alternating ring which encloses part of the gamma chain. CF(1) is attached to CF(0) by a central stalk formed by the gamma and epsilon chains, while a peripheral stalk is formed by the delta and b chains.

The protein resides in the cell inner membrane. It catalyses the reaction ATP + H2O + 4 H(+)(in) = ADP + phosphate + 5 H(+)(out). Functionally, produces ATP from ADP in the presence of a proton gradient across the membrane. The alpha chain is a regulatory subunit. The polypeptide is ATP synthase subunit alpha (Acidiphilium cryptum (strain JF-5)).